The sequence spans 117 residues: Iron-sulfur cluster insertion protein ErpA (117 aa).

Iron-sulfur cluster-binding residues include C45, C109, and C111.

The protein belongs to the HesB/IscA family. As to quaternary structure, homodimer. The cofactor is iron-sulfur cluster.

In terms of biological role, required for insertion of 4Fe-4S clusters for at least IspG. This is Iron-sulfur cluster insertion protein ErpA from Saccharophagus degradans (strain 2-40 / ATCC 43961 / DSM 17024).